The chain runs to 421 residues: Gamma-glutamyl phosphate reductase (421 aa).

Belongs to the gamma-glutamyl phosphate reductase family.

It localises to the cytoplasm. It carries out the reaction L-glutamate 5-semialdehyde + phosphate + NADP(+) = L-glutamyl 5-phosphate + NADPH + H(+). Its pathway is amino-acid biosynthesis; L-proline biosynthesis; L-glutamate 5-semialdehyde from L-glutamate: step 2/2. Functionally, catalyzes the NADPH-dependent reduction of L-glutamate 5-phosphate into L-glutamate 5-semialdehyde and phosphate. The product spontaneously undergoes cyclization to form 1-pyrroline-5-carboxylate. In Dinoroseobacter shibae (strain DSM 16493 / NCIMB 14021 / DFL 12), this protein is Gamma-glutamyl phosphate reductase.